The chain runs to 421 residues: 4-hydroxy-3-methylbut-2-en-1-yl diphosphate synthase (flavodoxin) (421 aa).

[4Fe-4S] cluster-binding residues include Cys-298, Cys-301, Cys-344, and Glu-351.

This sequence belongs to the IspG family. [4Fe-4S] cluster serves as cofactor.

The catalysed reaction is (2E)-4-hydroxy-3-methylbut-2-enyl diphosphate + oxidized [flavodoxin] + H2O + 2 H(+) = 2-C-methyl-D-erythritol 2,4-cyclic diphosphate + reduced [flavodoxin]. It participates in isoprenoid biosynthesis; isopentenyl diphosphate biosynthesis via DXP pathway; isopentenyl diphosphate from 1-deoxy-D-xylulose 5-phosphate: step 5/6. Its function is as follows. Converts 2C-methyl-D-erythritol 2,4-cyclodiphosphate (ME-2,4cPP) into 1-hydroxy-2-methyl-2-(E)-butenyl 4-diphosphate. The polypeptide is 4-hydroxy-3-methylbut-2-en-1-yl diphosphate synthase (flavodoxin) (Neisseria meningitidis serogroup B (strain ATCC BAA-335 / MC58)).